Consider the following 188-residue polypeptide: Ribose 1,5-bisphosphate phosphokinase PhnN (188 aa).

This sequence belongs to the ribose 1,5-bisphosphokinase family.

The enzyme catalyses alpha-D-ribose 1,5-bisphosphate + ATP = 5-phospho-alpha-D-ribose 1-diphosphate + ADP. Its pathway is metabolic intermediate biosynthesis; 5-phospho-alpha-D-ribose 1-diphosphate biosynthesis; 5-phospho-alpha-D-ribose 1-diphosphate from D-ribose 5-phosphate (route II): step 3/3. Functionally, catalyzes the phosphorylation of ribose 1,5-bisphosphate to 5-phospho-D-ribosyl alpha-1-diphosphate (PRPP). This Dickeya zeae (strain Ech586) (Dickeya dadantii (strain Ech586)) protein is Ribose 1,5-bisphosphate phosphokinase PhnN.